Here is a 105-residue protein sequence, read N- to C-terminus: Iron-sulfur cluster assembly protein CyaY (105 aa).

This sequence belongs to the frataxin family.

Its function is as follows. Involved in iron-sulfur (Fe-S) cluster assembly. May act as a regulator of Fe-S biogenesis. The chain is Iron-sulfur cluster assembly protein CyaY from Dechloromonas aromatica (strain RCB).